The following is a 254-amino-acid chain: Low affinity immunoglobulin gamma Fc region receptor III-A (254 aa).

Residues Met-1–Ala-16 form the signal peptide. Residues Gly-17–Gln-208 lie on the Extracellular side of the membrane. 2 Ig-like C2-type domains span residues Pro-24–His-105 and Gly-107–Thr-189. Cys-47 and Cys-89 are disulfide-bonded. Residues Asn-56, Asn-63, and Asn-92 are each glycosylated (N-linked (GlcNAc...) asparagine). A disulfide bridge links Cys-128 with Cys-172. N-linked (GlcNAc...) asparagine glycans are attached at residues Asn-180 and Asn-187. Residues Val-209–Val-229 traverse the membrane as a helical segment. Over Lys-230–Lys-254 the chain is Cytoplasmic. Residue Ser-236 is modified to Phosphoserine; by PKC. At Thr-237 the chain carries Phosphothreonine; by PKC.

As to quaternary structure, forms a heterooligomeric complex with ITAM-containing signaling subunits, either a homodimer of CD247, a homodimer of FCER1G or a heterodimer of CD247 and FCER1G. Interacts (via transmembrane domain) with signaling subunits; this interaction is a prerequisite for receptor complex expression on the cell surface and intracellular signal transduction. Binds the Fc region of antigen-complexed IgG with a preference for IgG1 and IgG3 isotypes. Interacts with CD2; this interaction is involved in NK cell activation and cytotoxicity. Interacts with S100A4; this interaction inhibits PKC-dependent phosphorylation of FCGR3A. Post-translationally, glycosylated. Contains high mannose- and complex-type oligosaccharides. Glycosylation at Asn-180 is mandatory for high affinity binding to the Fc and for discrimination between fucosylated and afucosylated IgG glycoforms. Undergoes rapid ectodomain shedding upon NK cell stimulation. The soluble form is produced by a proteolytic cleavage mediated by ADAM17. Repeated stimulation causes receptor shedding, a mechanism that allows for increased NK cell motility and detachment from opsonized target cells while avoiding activation-induced NK cell apoptosis. In terms of processing, phosphorylated at RSSTR motif by PKC. The relevant physiological PKCs might be PRKCI, PRKCG, PRKCE, PRKCH and PRKCQ. As to expression, expressed in natural killer cells (at protein level). Expressed in a subset of circulating monocytes (at protein level).

It is found in the cell membrane. The protein localises to the secreted. Functionally, receptor for the invariable Fc fragment of immunoglobulin gamma (IgG). Optimally activated upon binding of clustered antigen-IgG complexes displayed on cell surfaces, triggers lysis of antibody-coated cells, a process known as antibody-dependent cellular cytotoxicity (ADCC). Does not bind free monomeric IgG, thus avoiding inappropriate effector cell activation in the absence of antigenic trigger. Mediates IgG effector functions on natural killer (NK) cells. Binds antigen-IgG complexes generated upon infection and triggers NK cell-dependent cytokine production and degranulation to limit viral load and propagation. Involved in the generation of memory-like adaptive NK cells capable to produce high amounts of IFNG and to efficiently eliminate virus-infected cells via ADCC. Regulates NK cell survival and proliferation, in particular by preventing NK cell progenitor apoptosis. Fc-binding subunit that associates with CD247 and/or FCER1G adapters to form functional signaling complexes. Following the engagement of antigen-IgG complexes, triggers phosphorylation of immunoreceptor tyrosine-based activation motif (ITAM)-containing adapters with subsequent activation of phosphatidylinositol 3-kinase signaling and sustained elevation of intracellular calcium that ultimately drive NK cell activation. The ITAM-dependent signaling coupled to receptor phosphorylation by PKC mediates robust intracellular calcium flux that leads to production of pro-inflammatory cytokines, whereas in the absence of receptor phosphorylation it mainly activates phosphatidylinositol 3-kinase signaling leading to cell degranulation. Costimulates NK cells and trigger lysis of target cells independently of IgG binding. Mediates the antitumor activities of therapeutic antibodies. Upon ligation on monocytes triggers TNFA-dependent ADCC of IgG-coated tumor cells. Mediates enhanced ADCC in response to afucosylated IgGs. (Microbial infection) Involved in Dengue virus pathogenesis via antibody-dependent enhancement (ADE) mechanism. Secondary infection with Dengue virus triggers elevated levels of afucosylated non-neutralizing IgG1s with reactivity to viral envelope/E protein. Viral antigen-IgG1 complexes bind with high affinity to FCGR3A, facilitating virus entry in myeloid cells and subsequent viral replication. In Homo sapiens (Human), this protein is Low affinity immunoglobulin gamma Fc region receptor III-A.